The sequence spans 586 residues: Switch-associated protein 70 (586 aa).

In terms of domain architecture, PH spans 210 to 306; the sequence is DVLKQGYMLK…WIQAIQTTVS (97 aa). Positions 316–538 form a coiled coil; the sequence is HKEARQKRKE…NNTRSWKDKV (223 aa).

The SWAP complex consists of NPM1, NCL, PARP1 and SWAP70. Tyrosine-phosphorylated.

It localises to the cytoplasm. It is found in the cell membrane. The protein localises to the nucleus. The protein resides in the cell projection. Its subcellular location is the lamellipodium. Phosphatidylinositol 3,4,5-trisphosphate-dependent guanine nucleotide exchange factor (GEF) which, independently of RAS, transduces signals from tyrosine kinase receptors to RAC. It also mediates signaling of membrane ruffling. Regulates the actin cytoskeleton as an effector or adapter protein in response to agonist stimulated phosphatidylinositol (3,4)-bisphosphate production and cell protrusion. The chain is Switch-associated protein 70 (SWAP70) from Gallus gallus (Chicken).